The following is a 149-amino-acid chain: Transcription factor bHLH153 (149 aa).

A bHLH domain is found at 27-76 (RHKSDLSFSSKERKDKVGERISALQQIVSPYGKTDTASVLLDAMHYIEFL).

The protein belongs to the bHLH protein family.

The protein resides in the nucleus. In Arabidopsis thaliana (Mouse-ear cress), this protein is Transcription factor bHLH153.